The primary structure comprises 121 residues: Heme-degrading monooxygenase (121 aa).

Residues 2-101 form the ABM domain; the sequence is IIVTNTIKVE…EQREDRKGIV (100 aa). Residue asparagine 6 participates in Fe cation binding. The disordered stretch occupies residues 76–98; the sequence is KSDSFKKAHGRTKDTREQREDRK. A compositionally biased stretch (basic and acidic residues) spans 78-98; sequence DSFKKAHGRTKDTREQREDRK. A heme-binding site is contributed by histidine 84.

The protein belongs to the antibiotic biosynthesis monooxygenase family. Heme-degrading monooxygenase IsdG subfamily. As to quaternary structure, homodimer.

Its subcellular location is the cytoplasm. It carries out the reaction heme b + 3 reduced [NADPH--hemoprotein reductase] + 3 O2 = biliverdin IXalpha + CO + Fe(2+) + 3 oxidized [NADPH--hemoprotein reductase] + 3 H2O + H(+). Its function is as follows. Allows bacterial pathogens to use the host heme as an iron source. Catalyzes the oxidative degradation of the heme macrocyclic porphyrin ring to the biliverdin in the presence of a suitable electron donor such as ascorbate or NADPH--cytochrome P450 reductase, with subsequent release of free iron. This is Heme-degrading monooxygenase from Listeria innocua serovar 6a (strain ATCC BAA-680 / CLIP 11262).